The primary structure comprises 467 residues: DNA methyltransferase 1-associated protein 1 (467 aa).

2 stretches are compositionally biased toward basic and acidic residues: residues 1-11 and 26-48; these read MATGADVRDIL and SKKDIINPDKKKSKKSSETLTFK. Residues 1–48 are disordered; sequence MATGADVRDILELGGPEGDAASGTISKKDIINPDKKKSKKSSETLTFK. Residue Lys27 forms a Glycyl lysine isopeptide (Lys-Gly) (interchain with G-Cter in SUMO2) linkage. The 51-residue stretch at 149–199 folds into the SANT domain; the sequence is DDAWTKAETDHLFDLSRRFDLRFVVIHDRYDHQQFKKRSVEDLKERYYHIC. Residue Lys214 forms a Glycyl lysine isopeptide (Lys-Gly) (interchain with G-Cter in SUMO2) linkage. Residues 225–275 adopt a coiled-coil conformation; that stretch reads RRKEQLERLYNRTPEQVAEEEYLLQELRKIEARKKEREKRSQDLQKLITAA. The segment covering 258–267 has biased composition (basic and acidic residues); that stretch reads KKEREKRSQD. Disordered stretches follow at residues 258 to 305 and 404 to 467; these read KKER…PAVP and LGGP…AKKP. Positions 406-422 are enriched in low complexity; the sequence is GPATPASGPGPASAEPA. Thr445 carries the phosphothreonine modification. A Phosphoserine modification is found at Ser448.

Component of the NuA4 histone acetyltransferase complex which contains the catalytic subunit KAT5/TIP60 and the subunits EP400, TRRAP/PAF400, BRD8/SMAP, EPC1, DMAP1/DNMAP1, RUVBL1/TIP49, RUVBL2, ING3, actin, ACTL6A/BAF53A, MORF4L1/MRG15, MORF4L2/MRGX, MRGBP, YEATS4/GAS41, VPS72/YL1 and MEAF6. Component of a NuA4-related complex which contains EP400, TRRAP/PAF400, SRCAP, BRD8/SMAP, EPC1, DMAP1/DNMAP1, RUVBL1/TIP49, RUVBL2, actin, ACTL6A/BAF53A, VPS72 and YEATS4/GAS41. DMAP1 also forms a complex with DNMT1 and HDAC2. Throughout S phase it interacts directly with the N-terminus of DNMT1, which serves to recruit DMAP1 to replication foci. DMAP1 interacts with ING1, a component of the mSin3A transcription repressor complex, although this interaction is not required for recruitment of ING1 to heterochromatin. Interacts directly with the transcriptional corepressor TSG101. Interacts with the pro-apoptotic protein DAXX. Interacts with URI1.

The protein resides in the nucleus. Its subcellular location is the cytoplasm. Functionally, involved in transcription repression and activation. Its interaction with HDAC2 may provide a mechanism for histone deacetylation in heterochromatin following replication of DNA at late firing origins. Can also repress transcription independently of histone deacetylase activity. May specifically potentiate DAXX-mediated repression of glucocorticoid receptor-dependent transcription. Component of the NuA4 histone acetyltransferase (HAT) complex which is involved in transcriptional activation of select genes principally by acetylation of nucleosomal histones H4 and H2A. This modification may both alter nucleosome - DNA interactions and promote interaction of the modified histones with other proteins which positively regulate transcription. This complex may be required for the activation of transcriptional programs associated with oncogene and proto-oncogene mediated growth induction, tumor suppressor mediated growth arrest and replicative senescence, apoptosis, and DNA repair. NuA4 may also play a direct role in DNA repair when recruited to sites of DNA damage. Participates in the nuclear localization of URI1 and increases its transcriptional corepressor activity. The sequence is that of DNA methyltransferase 1-associated protein 1 (DMAP1) from Homo sapiens (Human).